We begin with the raw amino-acid sequence, 354 residues long: Multiple sugar-binding periplasmic receptor ChvE (354 aa).

The signal sequence occupies residues 1–25 (MKSIISLTAAAAIGVAMFVAPAFAA).

It belongs to the bacterial solute-binding protein 2 family.

It is found in the periplasm. Its function is as follows. Required for effective transcriptional induction of the vir genes by monosaccharides in response to plant signals and for normal growth and chemotaxis towards certain sugars. Functions as a periplasmic multiple sugar-binding receptor protein. It does not interact with a transport system. This chain is Multiple sugar-binding periplasmic receptor ChvE (chvE), found in Rhizobium radiobacter (Agrobacterium tumefaciens).